We begin with the raw amino-acid sequence, 293 residues long: Undecaprenyl-diphosphatase (293 aa).

6 consecutive transmembrane segments (helical) span residues valine 74–phenylalanine 94, tryptophan 107–isoleucine 127, methionine 134–methionine 154, phenylalanine 209–alanine 229, valine 243–valine 263, and phenylalanine 271–leucine 291.

Belongs to the UppP family.

The protein localises to the cell membrane. It carries out the reaction di-trans,octa-cis-undecaprenyl diphosphate + H2O = di-trans,octa-cis-undecaprenyl phosphate + phosphate + H(+). Functionally, catalyzes the dephosphorylation of undecaprenyl diphosphate (UPP). Confers resistance to bacitracin. The polypeptide is Undecaprenyl-diphosphatase (Corynebacterium glutamicum (strain ATCC 13032 / DSM 20300 / JCM 1318 / BCRC 11384 / CCUG 27702 / LMG 3730 / NBRC 12168 / NCIMB 10025 / NRRL B-2784 / 534)).